The chain runs to 291 residues: Segregation and condensation protein B (291 aa).

Belongs to the ScpB family. Homodimer. Homodimerization may be required to stabilize the binding of ScpA to the Smc head domains. Component of a cohesin-like complex composed of ScpA, ScpB and the Smc homodimer, in which ScpA and ScpB bind to the head domain of Smc. The presence of the three proteins is required for the association of the complex with DNA.

The protein resides in the cytoplasm. In terms of biological role, participates in chromosomal partition during cell division. May act via the formation of a condensin-like complex containing Smc and ScpA that pull DNA away from mid-cell into both cell halves. This Mycoplasmoides gallisepticum (strain R(low / passage 15 / clone 2)) (Mycoplasma gallisepticum) protein is Segregation and condensation protein B.